The following is a 423-amino-acid chain: Aspartate aminotransferase, mitochondrial (423 aa).

Residues 1 to 22 (MALLQSRLLLSAPRRAAATARA) constitute a mitochondrion transit peptide. Substrate contacts are provided by G58, W155, and N208. K272 is subject to N6-(pyridoxal phosphate)lysine. Residue R400 coordinates substrate.

It belongs to the class-I pyridoxal-phosphate-dependent aminotransferase family. As to quaternary structure, homodimer. Pyridoxal 5'-phosphate serves as cofactor. In terms of tissue distribution, detected in heart (at protein level).

It localises to the mitochondrion matrix. It carries out the reaction L-aspartate + 2-oxoglutarate = oxaloacetate + L-glutamate. The catalysed reaction is L-kynurenine + 2-oxoglutarate = kynurenate + L-glutamate + H2O. In terms of biological role, catalyzes the irreversible transamination of the L-tryptophan metabolite L-kynurenine to form kynurenic acid (KA). As a member of the malate-aspartate shuttle, it has a key role in the intracellular NAD(H) redox balance. Is important for metabolite exchange between mitochondria and cytosol, and for amino acid metabolism. The protein is Aspartate aminotransferase, mitochondrial (GOT2) of Gallus gallus (Chicken).